We begin with the raw amino-acid sequence, 467 residues long: MLPGTSRLPTEASMSWVLLSVLWLIIQIQVIDATLTPELKPHEIVRPKKLPISQKRGLENNQTERYGKEEKYAPEVQYQIILNGEEIVFHLKRTKHLLGPDYTETSYSPRGEESTRHSQDVKPCYYEGHIQNARGSLARISTCDGLRGYFTHRDQRYQIKPLQSTDEGEHAVLPYSWKGQDTVHDKDAEKQVVRKRSHLRTSRSLKNPNEDLLQGQKYIGLFLVLDNAYYKLYNGNVTQMRTFLFKVLNLLNMIYKTINIQVSLVGMEIWSDQDKIKVEPNLGATFTHFMRWHYSNLGKRIHNHAQLLSGASFRHGRVGMAAGNSFCTTSSVSVIEAKKKNNVALVALMSHELGHALGMKDVPYYTKCPSGSCVMNQYLSSKFPKDFSTVSRSHFQGFLSSRNARCLLLAPDPKNIIKPTCGNQVLDVGEECDCGSPEECTNLCCEPLTCRLKSQPDCSEASNHITE.

Residues 1–33 form the signal peptide; the sequence is MLPGTSRLPTEASMSWVLLSVLWLIIQIQVIDA. Residues 34 to 208 constitute a propeptide that is removed on maturation; sequence TLTPELKPHE…LRTSRSLKNP (175 aa). 2 N-linked (GlcNAc...) asparagine glycosylation sites follow: asparagine 61 and asparagine 236. One can recognise a Peptidase M12B domain in the interval 217-411; sequence KYIGLFLVLD…RNARCLLLAP (195 aa). Disulfide bonds link cysteine 327–cysteine 406 and cysteine 368–cysteine 373. Residue histidine 351 coordinates Zn(2+). Glutamate 352 is an active-site residue. The Zn(2+) site is built by histidine 355 and aspartate 361. The Disintegrin domain occupies 418–467; that stretch reads KPTCGNQVLDVGEECDCGSPEECTNLCCEPLTCRLKSQPDCSEASNHITE.

The cofactor is Zn(2+). As to expression, expressed highly in uterus during pregnancy.

The protein localises to the secreted. Functionally, may play an important role in the control of the immune response and during pregnancy. The sequence is that of ADAM DEC1 (Adamdec1) from Mus musculus (Mouse).